A 234-amino-acid polypeptide reads, in one-letter code: Phosphoribosylformylglycinamidine synthase subunit PurQ (234 aa).

A Glutamine amidotransferase type-1 domain is found at 4–234 (RIGVVTFPGS…TSILKKLVNA (231 aa)). The Nucleophile role is filled by Cys-87. Residues His-204 and Glu-206 contribute to the active site.

Part of the FGAM synthase complex composed of 1 PurL, 1 PurQ and 2 PurS subunits.

Its subcellular location is the cytoplasm. The catalysed reaction is N(2)-formyl-N(1)-(5-phospho-beta-D-ribosyl)glycinamide + L-glutamine + ATP + H2O = 2-formamido-N(1)-(5-O-phospho-beta-D-ribosyl)acetamidine + L-glutamate + ADP + phosphate + H(+). The enzyme catalyses L-glutamine + H2O = L-glutamate + NH4(+). It functions in the pathway purine metabolism; IMP biosynthesis via de novo pathway; 5-amino-1-(5-phospho-D-ribosyl)imidazole from N(2)-formyl-N(1)-(5-phospho-D-ribosyl)glycinamide: step 1/2. In terms of biological role, part of the phosphoribosylformylglycinamidine synthase complex involved in the purines biosynthetic pathway. Catalyzes the ATP-dependent conversion of formylglycinamide ribonucleotide (FGAR) and glutamine to yield formylglycinamidine ribonucleotide (FGAM) and glutamate. The FGAM synthase complex is composed of three subunits. PurQ produces an ammonia molecule by converting glutamine to glutamate. PurL transfers the ammonia molecule to FGAR to form FGAM in an ATP-dependent manner. PurS interacts with PurQ and PurL and is thought to assist in the transfer of the ammonia molecule from PurQ to PurL. This chain is Phosphoribosylformylglycinamidine synthase subunit PurQ, found in Streptomyces avermitilis (strain ATCC 31267 / DSM 46492 / JCM 5070 / NBRC 14893 / NCIMB 12804 / NRRL 8165 / MA-4680).